Consider the following 11103-residue polypeptide: Colossin-A (11103 aa).

Positions 1-35 are cleaved as a signal peptide; that stretch reads MGTIKTKFKNNYLKNSYLFIIYIILFNLVIGIANS. Asparagine 95, asparagine 120, asparagine 137, and asparagine 198 each carry an N-linked (GlcNAc...) asparagine glycan. The stretch at 273–324 is one Kelch 1 repeat; the sequence is NLFAVGNYVFFDVNRDGVHETTELFAPNVKVELYDAISSTRLIASTFTDLNG. The region spanning 298–359 is the CNA-B 1 domain; it reads APNVKVELYD…SNGPDNVINA (62 aa). 3 N-linked (GlcNAc...) asparagine glycosylation sites follow: asparagine 372, asparagine 386, and asparagine 422. One can recognise a CNA-B 2 domain in the interval 423–469; sequence LSGITVQLTTPSHVVLKTAQTDYAGNYVFDDLSEGVYSVHFILPENY. Asparagine 493 is a glycosylation site (N-linked (GlcNAc...) asparagine). 6 consecutive CNA-B domains span residues 551–599, 676–745, 803–871, 931–999, 1057–1095, and 1170–1231; these read LPGV…PDGY, VANV…INLT, APFV…FTLN, AEGV…IDLS, LPNITMTLINNAEGGKVVQSVSTDSKGQYSFTNVPEGDY, and LSNT…FNSS. An N-linked (GlcNAc...) asparagine glycan is attached at asparagine 678. 3 N-linked (GlcNAc...) asparagine glycosylation sites follow: asparagine 1059, asparagine 1229, and asparagine 1239. The 38-residue stretch at 1277–1314 folds into the CNA-B 9 domain; it reads ISNIPLSLISQKTNQIISSVVTDSNGKYQFEDVPPGDY. An N-linked (GlcNAc...) asparagine glycan is attached at asparagine 1329. CNA-B domains are found at residues 1391–1458, 1494–1530, 1602–1651, 1708–1779, 1824–1891, 1927–1963, 2035–2086, and 2141–2177; these read SDVS…FKLT, LPGVELSLQDSNGKVLDTTTTDESGNYKFDNLLPGDY, LPGV…YKQV, LSDI…VTVK, LPGVELSLQDSNGKVLETTTTDESGNYKFDNLLPGDY, LPGV…QVAQ, and VEGIELNLVDKDGKVIQSTTSGPNGKYQFEDVPPGDY. A glycan (N-linked (GlcNAc...) asparagine) is linked at asparagine 1613. Residues 1716–1740 form a disordered region; it reads TDKDGNEISNTKSGPDGKYQFEDVP. Residues asparagine 1759 and asparagine 1772 are each glycosylated (N-linked (GlcNAc...) asparagine). Residue asparagine 2046 is glycosylated (N-linked (GlcNAc...) asparagine). 2 N-linked (GlcNAc...) asparagine glycosylation sites follow: asparagine 2192 and asparagine 2311. 8 CNA-B domains span residues 2254-2321, 2357-2402, 2465-2514, 2571-2640, 2687-2754, 2790-2835, 2898-2947, and 3004-3040; these read SDVS…FKLT, LPGV…TPIG, LPGV…YKQV, LSDI…NFVT, and LEGIELQLVDKDGKVIQSTTSGPDGKYQFEDVPPGDY. A glycan (N-linked (GlcNAc...) asparagine) is linked at asparagine 2476. Residues 2580-2603 form a disordered region; that stretch reads DKDGNEITNTKSGPDGKYQFEDVP. Residue asparagine 2622 is glycosylated (N-linked (GlcNAc...) asparagine). Asparagine 2801 and asparagine 2909 each carry an N-linked (GlcNAc...) asparagine glycan. N-linked (GlcNAc...) asparagine glycans are attached at residues asparagine 3048, asparagine 3055, and asparagine 3118. CNA-B domains follow at residues 3117–3184, 3220–3256, 3328–3364, and 3434–3470; these read SNVS…FKLT, LPGVELSLQDPNGIVIQTITTDSDGNYYFDNLLPGDY, LPGVQVIITSSNGTKIADLVTDENGKYALKDQVPGSY, and VEGIELQLVDKDGKVIQSTTSGPDGKYQFEDVPPGDY. Asparagine 3339 carries N-linked (GlcNAc...) asparagine glycosylation. Asparagine 3485 is a glycosylation site (N-linked (GlcNAc...) asparagine). A Kelch 2 repeat occupies 3503-3549; that stretch reads SCFAVSGPLDNQNLGLSLFYEIGTMVWIDSNNNGKFEQPSDVLKSDV. CNA-B domains lie at 3547 to 3614, 3650 to 3686, and 3758 to 3809; these read SDVS…FKLT, LPGVELSLQDSNGKVLDTTTTDESGSYKFDNLLPGDY, and LPGV…QVAQ. N-linked (GlcNAc...) asparagine glycosylation is found at asparagine 3769 and asparagine 3827. The region spanning 3864–3900 is the CNA-B 33 domain; sequence LSDITIRLTDKDGKVIQSTTSGPDGKYQFEDVPPGDY. Asparagine 3915 carries N-linked (GlcNAc...) asparagine glycosylation. CNA-B domains lie at 3980–4047, 4083–4128, 4191–4240, 4297–4378, 4425–4492, 4528–4573, 4636–4685, and 4742–4778; these read SDVS…FKLT, LPGV…TPIG, LPGV…YKQV, LSDI…NFVT, and VEGIPLTLIDKYGNSIQSTASGPNGKYQFEDVPPGDY. An N-linked (GlcNAc...) asparagine glycan is attached at asparagine 4202. Residues 4286–4341 form a disordered region; that stretch reads NTGKQTDDSPPLSDITIRLTDKDGNEITKTKSRPDGNENSNTKSGPDGKYQFEDVP. Residues 4304–4321 show a composition bias toward basic and acidic residues; it reads LTDKDGNEITKTKSRPDG. Asparagine 4360 carries N-linked (GlcNAc...) asparagine glycosylation. A glycan (N-linked (GlcNAc...) asparagine) is linked at asparagine 4647. 2 N-linked (GlcNAc...) asparagine glycosylation sites follow: asparagine 4792 and asparagine 4918. CNA-B domains are found at residues 4865–4928, 4964–5009, 5072–5123, and 5178–5214; these read ITLT…FKLT, LPGV…TPIG, LPGV…QVAQ, and LEGIELQLVDKDGKVIQSTTSGPNGKYQFEDVPPGDY. Residue asparagine 5083 is glycosylated (N-linked (GlcNAc...) asparagine). Asparagine 5229, asparagine 5292, and asparagine 5348 each carry an N-linked (GlcNAc...) asparagine glycan. One copy of the Kelch 3 repeat lies at 5247 to 5293; that stretch reads SCFAVSGPLDNQNLGLSPFYEIGTIVWIDSNNNDKFEQPSDIGKSNV. 4 consecutive CNA-B domains span residues 5291 to 5358, 5394 to 5430, 5502 to 5553, and 5608 to 5644; these read SNVS…FKLT, LPGVELSLQDSNGKVLDTTTTDESGNYKFDNLLPGDY, LPGV…QVAQ, and LSDITIRLTDKDGNEITNTKSGPDGKYQFEDVPPGDY. Residue asparagine 5513 is glycosylated (N-linked (GlcNAc...) asparagine). The N-linked (GlcNAc...) asparagine glycan is linked to asparagine 5659. 4 consecutive CNA-B domains span residues 5724–5791, 5827–5872, 5935–5984, and 6041–6077; these read SDVS…FKLT, LPGV…TPIG, LPGV…YKQV, and VEGIELNLVDKDGKVIQSTTSGPDGKYQFEDVPPGDY. N-linked (GlcNAc...) asparagine glycosylation is present at asparagine 5946. Residues asparagine 6092 and asparagine 6155 are each glycosylated (N-linked (GlcNAc...) asparagine). CNA-B domains are found at residues 6154 to 6221, 6257 to 6302, 6365 to 6416, and 6471 to 6507; these read SNVS…FKLT, LPGV…TPIG, LPGV…QDAQ, and LSDITIRLTDKDGNEITNTKSGPDGKYQFEDVPPGDY. Asparagine 6376 carries an N-linked (GlcNAc...) asparagine glycan. Residues asparagine 6522 and asparagine 6535 are each glycosylated (N-linked (GlcNAc...) asparagine). 4 consecutive CNA-B domains span residues 6587–6654, 6690–6726, 6798–6849, and 6904–6940; these read SDVS…FKLT, LEGVELSLQDPNGTVLQTITTDESGNYKFDNLLPGDY, LPGV…QVNQ, and VEGIPLTLIDKYGNSIQSTASGPNGKYQFEDVPPGDY. N-linked (GlcNAc...) asparagine glycosylation is found at asparagine 6701, asparagine 6809, and asparagine 6848. Residues asparagine 6954, asparagine 7080, asparagine 7137, and asparagine 7245 are each glycosylated (N-linked (GlcNAc...) asparagine). CNA-B domains are found at residues 7023-7090, 7126-7171, 7234-7285, 7340-7411, 7456-7523, 7559-7596, 7668-7719, and 7774-7810; these read SDVS…FKLT, LAGV…TPIG, LPGV…QDAQ, LSDI…VTVK, LPGVELSLQDSNGKVLDTTTTTDESGNYKFDNLLPGDY, LTGV…QVAQ, and VEGIELNLVDKDDKVIQSTTSGPDGKYQFEDVPPGDY. The tract at residues 7351–7372 is disordered; the sequence is DGNEITNTKSGPDGKYQFEDVP. N-linked (GlcNAc...) asparagine glycosylation is found at asparagine 7391 and asparagine 7404. Asparagine 7679 carries N-linked (GlcNAc...) asparagine glycosylation. N-linked (GlcNAc...) asparagine glycans are attached at residues asparagine 7825 and asparagine 7837. CNA-B domains lie at 7887–7954, 7990–8035, 8098–8149, 8204–8265, 8313–8374, 8420–8456, and 8528–8587; these read SDVS…FKLT, LPGV…TPIG, LPGV…QVAQ, IPNI…FSLS, VGKS…VVDQ, LPGVELSLQDSNGKVLQTTTTNESGNYKFDNLPQGDY, and LPGI…PFDS. 2 N-linked (GlcNAc...) asparagine glycosylation sites follow: asparagine 8109 and asparagine 8255. N-linked (GlcNAc...) asparagine glycans are attached at residues asparagine 8441, asparagine 8539, asparagine 8629, asparagine 8636, asparagine 8655, asparagine 8693, asparagine 8753, asparagine 8811, asparagine 8896, asparagine 8930, asparagine 8976, asparagine 9023, asparagine 9073, asparagine 9087, asparagine 9123, asparagine 9137, asparagine 9146, asparagine 9149, asparagine 9186, asparagine 9297, asparagine 9305, asparagine 9349, asparagine 9409, asparagine 9419, asparagine 9533, asparagine 9543, asparagine 9556, asparagine 9601, asparagine 9709, asparagine 9718, asparagine 9786, asparagine 9839, asparagine 9850, asparagine 9867, asparagine 9891, asparagine 9941, asparagine 9957, asparagine 9989, asparagine 10042, asparagine 10096, asparagine 10111, asparagine 10174, asparagine 10267, asparagine 10315, asparagine 10348, asparagine 10360, asparagine 10379, asparagine 10394, asparagine 10431, asparagine 10477, asparagine 10552, asparagine 10581, asparagine 10715, asparagine 10786, asparagine 10802, asparagine 10943, and asparagine 11018. A Kelch 4 repeat occupies 8592 to 8638; it reads CFDLLDKSITNANLGLIPLYNIGSDAWLDNLNNGVRRNDSLLVPNVT. In terms of domain architecture, CNA-B 77 spans 8634–8680; the sequence is VPNVTMSLYDNNGNLIETTITNSSGKYQFNDIQPGSYCVRATVPSNY. One can recognise a CNA-B 78 domain in the interval 8751–8810; that stretch reads LPNVTVQLYDKVSGNILAATRSDDKGGYVVPNLLPSADYCVQFEVPPGYIVVVDSDDSVT. Residues 8965–9014 form the CNA-B 79 domain; the sequence is LPGVSVSLFSPNGTSIANTITDENGKYAFKDQVPGSYCIKMIIPPHYQQV. Residues 9071–9107 form the CNA-B 80 domain; it reads VPNITMTLLDSQGKQINSTITNANGFYQFVDVAPGNY. The 36-residue stretch at 9185-9220 folds into the CNA-B 81 domain; it reads ANVSLSLVNTGNSEIKTTTTNSQGKYSFGQLLAGNY. One can recognise a CNA-B 82 domain in the interval 9299-9332; the sequence is TITLTPNNTALPTQTTTTDVNGNYRFDNLVVGNY. CNA-B domains lie at 9407 to 9447 and 9531 to 9569; these read LVNI…VVQF and MANITVFLRSGSNLSQTIATTTTDANGTYIFTHLAPGNY. A CNA-B 85 domain is found at 9659–9728; that stretch reads VEGITVRIYD…ATGYISIDLS (70 aa). The CNA-B 86 domain maps to 10044–10103; the sequence is TLFNADGSTPNDIFGKPIQMAVTDVNGKYSIPNVPPGSYYMTVSIPPRYIISNFTTTGLV. The CNA-B 87 domain occupies 10172 to 10236; that stretch reads LPNVTVLLLN…ITPTKLVSTS (65 aa). Residues 10313 to 10370 enclose the CNA-B 88 domain; it reads PGNFTVQLKSANQAVNGGLTTVPIGTVVATSPVAANGSFSIPNLQLGNYTLTLIPPSG.

This sequence belongs to the serine-aspartate repeat-containing protein (SDr) family.

The protein localises to the secreted. This Dictyostelium discoideum (Social amoeba) protein is Colossin-A (colA).